Consider the following 303-residue polypeptide: D-alanine--D-alanine ligase (303 aa).

An ATP-grasp domain is found at 100–295 (KQLLRRHGIL…FPALIARLIE (196 aa)). 127 to 180 (GLGYPLFVKPNTGGSSLCLSRVTQPEGLAPALEAVFAHCGEAIVEPAIPGVEVT) provides a ligand contact to ATP. Mg(2+) contacts are provided by D249, E262, and N264.

It belongs to the D-alanine--D-alanine ligase family. Mg(2+) serves as cofactor. Requires Mn(2+) as cofactor.

Its subcellular location is the cytoplasm. It carries out the reaction 2 D-alanine + ATP = D-alanyl-D-alanine + ADP + phosphate + H(+). It participates in cell wall biogenesis; peptidoglycan biosynthesis. In terms of biological role, cell wall formation. This is D-alanine--D-alanine ligase from Nitratidesulfovibrio vulgaris (strain ATCC 29579 / DSM 644 / CCUG 34227 / NCIMB 8303 / VKM B-1760 / Hildenborough) (Desulfovibrio vulgaris).